The following is a 94-amino-acid chain: Small ribosomal subunit protein uS17 (94 aa).

It belongs to the universal ribosomal protein uS17 family. As to quaternary structure, part of the 30S ribosomal subunit.

Its function is as follows. One of the primary rRNA binding proteins, it binds specifically to the 5'-end of 16S ribosomal RNA. This Streptomyces griseus subsp. griseus (strain JCM 4626 / CBS 651.72 / NBRC 13350 / KCC S-0626 / ISP 5235) protein is Small ribosomal subunit protein uS17.